The following is a 116-amino-acid chain: MNLDRLTELRKKKNWSLQYTADLLGIAKSTYAGYESGYRRPSLEALAMLADLFDTTCDELLGREKQKQTAPQAIELATWSSLDFTISVDGQPLSEDEIIQLITFIRTKRKVQEELS.

Residues 6–60 (LTELRKKKNWSLQYTADLLGIAKSTYAGYESGYRRPSLEALAMLADLFDTTCDEL) enclose the HTH cro/C1-type domain. A DNA-binding region (H-T-H motif) is located at residues 17-36 (LQYTADLLGIAKSTYAGYES).

Its function is as follows. Transcriptional repressor for the ans operon coding for L-asparaginase and L-aspartase. NH4(+) may influence this repression. This is HTH-type transcriptional regulator AnsR (ansR) from Bacillus subtilis (strain 168).